A 408-amino-acid chain; its full sequence is MTTKDPESEHPSVTLFRQYLRICTVQPNPDYGGAITFLEERARQLGLSCQKIEVVPGFVITVLTWPGTNPSLPSILLNSHTDVVPVFKEHWHHDPFEAFKDSEGYIYARGSQDMKSVSIQYLEAVRRLKSEGHRFPRTIHMTFVPDEEVGGHKGMELFVKRPEFQALRAGFALDEGLANPTDAFTVFYSERSPWWVRVTSTGKPGHASRFIEDTAAEKLHKVISSILAFREKERQRLQANPHLKEGAVTSVNLTKLEGGVAYNVVPATMSASFDFRVAPDVDMKAFEKQLQRWCQEAGEGVTFEFAQKFTEPRMTPTDDSDPWWAAFSGACKAMNLTLEPEIFPAATDSRYIRAVGIPALGFSPMNRTPVLLHDHNERLHEDIFLRGVDIYTGLLSALASVPTLPGES.

Residue histidine 80 coordinates Zn(2+). Aspartate 82 is an active-site residue. Aspartate 113 contributes to the Zn(2+) binding site. Catalysis depends on glutamate 147, which acts as the Proton acceptor. Zn(2+) is bound by residues glutamate 148, glutamate 175, and histidine 373.

The protein belongs to the peptidase M20A family. In terms of assembly, homodimer. Interacts with SPHK1. Zn(2+) is required as a cofactor.

The protein localises to the cytoplasm. The enzyme catalyses an N-acyl-L-amino acid + H2O = an L-alpha-amino acid + a carboxylate. It carries out the reaction N-acetyl-L-methionine + H2O = L-methionine + acetate. It catalyses the reaction N-acetyl-L-glutamine + H2O = L-glutamine + acetate. In terms of biological role, catalyzes the hydrolysis of N-acetylated amino acids to acetate and free amino acids. This is Aminoacylase-1 (Acy1) from Mus musculus (Mouse).